The primary structure comprises 199 residues: UPF0462 protein C4orf33 homolog (199 aa).

The protein belongs to the UPF0462 family.

The protein is UPF0462 protein C4orf33 homolog of Rattus norvegicus (Rat).